The following is a 453-amino-acid chain: Phenylalanine-4-hydroxylase (453 aa).

A2 is modified (N-acetylalanine). Phosphoserine; by PKA is present on S16. The ACT domain maps to 36 to 114; sequence SLIFSLKEEV…TVHELSRDKE (79 aa). Fe cation is bound by residues H285, H290, and E330.

The protein belongs to the biopterin-dependent aromatic amino acid hydroxylase family. In terms of assembly, homodimer and homotetramer. It depends on Fe(2+) as a cofactor. In terms of processing, phosphorylation at Ser-16 increases basal activity and facilitates activation by the substrate phenylalanine.

The catalysed reaction is (6R)-L-erythro-5,6,7,8-tetrahydrobiopterin + L-phenylalanine + O2 = (4aS,6R)-4a-hydroxy-L-erythro-5,6,7,8-tetrahydrobiopterin + L-tyrosine. It participates in amino-acid degradation; L-phenylalanine degradation; acetoacetate and fumarate from L-phenylalanine: step 1/6. With respect to regulation, N-terminal region of PAH is thought to contain allosteric binding sites for phenylalanine and to constitute an 'inhibitory' domain that regulates the activity of a catalytic domain in the C-terminal portion of the molecule. Functionally, catalyzes the hydroxylation of L-phenylalanine to L-tyrosine. This chain is Phenylalanine-4-hydroxylase (Pah), found in Rattus norvegicus (Rat).